Here is a 160-residue protein sequence, read N- to C-terminus: Allophycocyanin alpha chain (160 aa).

Asn70 carries the N4-methylasparagine modification. A (2R,3E)-phycocyanobilin-binding site is contributed by Cys80.

Belongs to the phycobiliprotein family. As to quaternary structure, component of the phycobilisome. Heterodimer of an alpha and a beta chain. Post-translationally, contains one covalently linked phycocyanobilin chromophore.

It is found in the cellular thylakoid membrane. Functionally, light-harvesting photosynthetic bile pigment-protein from the phycobiliprotein complex. Allophycocyanin has a maximum absorption at approximately 650 nanometers. This is Allophycocyanin alpha chain (apcA) from Mastigocladus laminosus (Fischerella sp.).